The primary structure comprises 281 residues: Nucleotide-binding protein DNO_0399 (281 aa).

6–13 (GMSGAGKS) contacts ATP. 55-58 (DARN) serves as a coordination point for GTP.

The protein belongs to the RapZ-like family.

In terms of biological role, displays ATPase and GTPase activities. In Dichelobacter nodosus (strain VCS1703A), this protein is Nucleotide-binding protein DNO_0399.